Here is a 609-residue protein sequence, read N- to C-terminus: MSAPTAPQTTLSTAPFPNSEKRYLIGTLYPQVRVPVRAIRQSATLEMIGGLTRQRPNPDVLVPDTSGPYTDPRIHIDLRRGLPHARPWLAADARLEVQAERLSAPLDGAGPLPFPAVPLSRRARSGQAITQMQAARRGEITPEMEFVALRENLRQAEAFELAQQHPGQSFGAAIPREITPEFVRAEVARGRAVIPANVNHPELEPTIIGRNFRVKVNANLGTSIVTSSIEEEVEKMVWATRWGADTVMDLSTGRHIHQTREWILRNSPVPVGTVPIYQALEKVGGVAEELTWEVYRDTLIEQAEQGVDYFTVHAGVRLAHIPLTARRRTGIVSRGGSILAKWCLAHHRENFLYTHFREICEILSAYDITFSLGDGLRPGSIEDANDAAQFAELDTLGELTRVAWEHGVQTMIEGPGHVPMQLIRENMTRQLQVCQEAPFYTLGPLTTDIAPGYDHITSAIGAAQIAWYGTAMLCYVTPKEHLGLPDRQDVRDGVIAYRIAAHAADLAKGHPGAQARDNALSQARFEFRWEDQFNLALDPERARALHDATLPADAAKTAHFCSMCGPHFCSMKLSHDLRADDILNGMAEKAREFRAAGGELYLDRPEGTP.

Residues Asn219, Met248, Tyr277, His313, 333–335, 374–377, and Glu413 each bind substrate; these read SRG and DGLR. His417 lines the Zn(2+) pocket. Tyr440 serves as a coordination point for substrate. A Zn(2+)-binding site is contributed by His481. The [4Fe-4S] cluster site is built by Cys561, Cys564, and Cys569.

Belongs to the ThiC family. The cofactor is [4Fe-4S] cluster.

It catalyses the reaction 5-amino-1-(5-phospho-beta-D-ribosyl)imidazole + S-adenosyl-L-methionine = 4-amino-2-methyl-5-(phosphooxymethyl)pyrimidine + CO + 5'-deoxyadenosine + formate + L-methionine + 3 H(+). It participates in cofactor biosynthesis; thiamine diphosphate biosynthesis. In terms of biological role, catalyzes the synthesis of the hydroxymethylpyrimidine phosphate (HMP-P) moiety of thiamine from aminoimidazole ribotide (AIR) in a radical S-adenosyl-L-methionine (SAM)-dependent reaction. In Deinococcus geothermalis (strain DSM 11300 / CIP 105573 / AG-3a), this protein is Phosphomethylpyrimidine synthase.